The chain runs to 141 residues: MAKKVVALIKLALQAGKANPAPPVGPALGQHGVNIMAFCKEYNSRTQDKAGFVIPVEISVFEDRSFSFITKTPPASVLITKAAGIAKGSGESAKGSAGSISTSQLEEIAKTKLPDLNCSSIESAMKVIEGTAKNMGVSIKD.

The protein belongs to the universal ribosomal protein uL11 family. Part of the ribosomal stalk of the 50S ribosomal subunit. Interacts with L10 and the large rRNA to form the base of the stalk. L10 forms an elongated spine to which L12 dimers bind in a sequential fashion forming a multimeric L10(L12)X complex. In terms of processing, one or more lysine residues are methylated.

Forms part of the ribosomal stalk which helps the ribosome interact with GTP-bound translation factors. In Prochlorococcus marinus (strain NATL1A), this protein is Large ribosomal subunit protein uL11.